The sequence spans 147 residues: MRFDSNQLGNVEVDETTIITFPQGIPALENCTRFKLFHDITQPTPQMYWLQSLDDPGITFSLALPDRLGVRFQIELSDEEVAQLQLSGPQDAAILLMLYRPLDLDRDSHPVLGALQANLCNPLVISLSSRRGIQKTGLKIDILLHTP.

It belongs to the FliW family. As to quaternary structure, interacts with translational regulator CsrA and flagellin(s).

It localises to the cytoplasm. In terms of biological role, acts as an anti-CsrA protein, binds CsrA and prevents it from repressing translation of its target genes, one of which is flagellin. Binds to flagellin and participates in the assembly of the flagellum. The protein is Flagellar assembly factor FliW of Chromobacterium violaceum (strain ATCC 12472 / DSM 30191 / JCM 1249 / CCUG 213 / NBRC 12614 / NCIMB 9131 / NCTC 9757 / MK).